The following is a 318-amino-acid chain: NADH-ubiquinone oxidoreductase chain 1 (318 aa).

The next 8 helical transmembrane spans lie at 2 to 22 (FMIN…FLTL), 70 to 90 (MFII…IPLP), 100 to 120 (LGIL…LWSG), 147 to 167 (AIIL…TLII), 171 to 191 (YLWL…STLA), 217 to 237 (AGPF…MNIF), 254 to 276 (LYSI…IRAS), and 294 to 314 (LPLT…LSSI).

It belongs to the complex I subunit 1 family. Core subunit of respiratory chain NADH dehydrogenase (Complex I) which is composed of 45 different subunits.

The protein localises to the mitochondrion inner membrane. It carries out the reaction a ubiquinone + NADH + 5 H(+)(in) = a ubiquinol + NAD(+) + 4 H(+)(out). In terms of biological role, core subunit of the mitochondrial membrane respiratory chain NADH dehydrogenase (Complex I) which catalyzes electron transfer from NADH through the respiratory chain, using ubiquinone as an electron acceptor. Essential for the catalytic activity and assembly of complex I. The protein is NADH-ubiquinone oxidoreductase chain 1 (MT-ND1) of Equus asinus (Donkey).